The following is a 312-amino-acid chain: DNA-directed RNA polymerase subunit alpha (312 aa).

An alpha N-terminal domain (alpha-NTD) region spans residues 1 to 229; sequence MLQYQIDRIE…ELFQPLATVT (229 aa). The interval 239-312 is alpha C-terminal domain (alpha-CTD); the sequence is EPSAEAQIPL…ISIPQSRTSA (74 aa).

It belongs to the RNA polymerase alpha chain family. In terms of assembly, in cyanobacteria the RNAP catalytic core is composed of 2 alpha, 1 beta, 1 beta', 1 gamma and 1 omega subunit. When a sigma factor is associated with the core the holoenzyme is formed, which can initiate transcription.

It catalyses the reaction RNA(n) + a ribonucleoside 5'-triphosphate = RNA(n+1) + diphosphate. In terms of biological role, DNA-dependent RNA polymerase catalyzes the transcription of DNA into RNA using the four ribonucleoside triphosphates as substrates. The polypeptide is DNA-directed RNA polymerase subunit alpha (Synechococcus sp. (strain CC9605)).